We begin with the raw amino-acid sequence, 378 residues long: MKILVDENMPYARDLFSRLGEVTAVPGRPIPVAQLADADALMVRSVTKVNESLLAGKPIKFVGTATAGTDHVDEAWLKQAGIGFSAAPGCNAIAVVEYVFSSLLMLAERDGFSLHERTVGIVGVGNVGRRLQARLEALGITTLLCDPPRADRGDEGDFRSLNELAQHADILTFHTPLFKDGPYKTLHLADEKLIRSLKPGAILINACRGAVVDNTALLTCLNEGQKLSVVLDVWEGEPELNVELLKKVDIGTPHIAGYTLEGKARGTTQVFEAYSKFIGHEQHVALDTLLPAPEFGRITLHGPLDQPTLKRLVHLVYDVRRDDAPLRKVAGIPGEFDKLRKNYLERREWSSLYVICDDASAASLLCKLGFNAVHHPAR.

Positions 45 and 66 each coordinate substrate. NAD(+) is bound by residues D146 and T175. R208 is a catalytic residue. NAD(+) is bound at residue D232. The active site involves E237. Residue H254 is the Proton donor of the active site. An NAD(+)-binding site is contributed by G257. Y258 contributes to the substrate binding site.

The protein belongs to the D-isomer specific 2-hydroxyacid dehydrogenase family. PdxB subfamily. In terms of assembly, homodimer.

Its subcellular location is the cytoplasm. It carries out the reaction 4-phospho-D-erythronate + NAD(+) = (R)-3-hydroxy-2-oxo-4-phosphooxybutanoate + NADH + H(+). Its pathway is cofactor biosynthesis; pyridoxine 5'-phosphate biosynthesis; pyridoxine 5'-phosphate from D-erythrose 4-phosphate: step 2/5. Functionally, catalyzes the oxidation of erythronate-4-phosphate to 3-hydroxy-2-oxo-4-phosphonooxybutanoate. The chain is Erythronate-4-phosphate dehydrogenase from Escherichia coli O81 (strain ED1a).